Here is a 257-residue protein sequence, read N- to C-terminus: Ribonuclease HII (257 aa).

Positions 71-257 constitute an RNase H type-2 domain; it reads ELIAGIDEVG…EPIKSMVNFK (187 aa). The a divalent metal cation site is built by Asp-77, Glu-78, and Asp-169.

This sequence belongs to the RNase HII family. The cofactor is Mn(2+). Mg(2+) is required as a cofactor.

Its subcellular location is the cytoplasm. It carries out the reaction Endonucleolytic cleavage to 5'-phosphomonoester.. Its function is as follows. Endonuclease that specifically degrades the RNA of RNA-DNA hybrids. The polypeptide is Ribonuclease HII (rnhB) (Lactococcus lactis subsp. cremoris (strain MG1363)).